Here is a 263-residue protein sequence, read N- to C-terminus: S-acyl fatty acid synthase thioesterase, medium chain (263 aa).

Met1 carries the N-acetylmethionine modification. Catalysis depends on residues Ser101 and His237. The segment at 262-263 is important for interaction with FASN; it reads LT.

Belongs to the thioesterase family. In terms of assembly, interacts (via C-terminus) with FASN.

It localises to the cytoplasm. The protein localises to the cytosol. It carries out the reaction (9Z)-octadecenoyl-[ACP] + H2O = (9Z)-octadecenoate + holo-[ACP] + H(+). The catalysed reaction is decanoyl-CoA + H2O = decanoate + CoA + H(+). The enzyme catalyses dodecanoyl-CoA + H2O = dodecanoate + CoA + H(+). It catalyses the reaction tetradecanoyl-CoA + H2O = tetradecanoate + CoA + H(+). It carries out the reaction hexadecanoyl-CoA + H2O = hexadecanoate + CoA + H(+). Contributes to the release of free fatty acids from fatty acid synthase (FASN). Has broad substrate specificity, giving rise to a range of free fatty acids with chain lengths between 10 and 16 carbon atoms (C10 - C16). This chain is S-acyl fatty acid synthase thioesterase, medium chain, found in Rattus norvegicus (Rat).